Reading from the N-terminus, the 303-residue chain is Recombination-associated protein RdgC (303 aa).

This sequence belongs to the RdgC family.

Its subcellular location is the cytoplasm. The protein localises to the nucleoid. May be involved in recombination. The chain is Recombination-associated protein RdgC from Aeromonas hydrophila subsp. hydrophila (strain ATCC 7966 / DSM 30187 / BCRC 13018 / CCUG 14551 / JCM 1027 / KCTC 2358 / NCIMB 9240 / NCTC 8049).